Here is a 176-residue protein sequence, read N- to C-terminus: ATP synthase subunit delta (176 aa).

This sequence belongs to the ATPase delta chain family. In terms of assembly, F-type ATPases have 2 components, F(1) - the catalytic core - and F(0) - the membrane proton channel. F(1) has five subunits: alpha(3), beta(3), gamma(1), delta(1), epsilon(1). F(0) has three main subunits: a(1), b(2) and c(10-14). The alpha and beta chains form an alternating ring which encloses part of the gamma chain. F(1) is attached to F(0) by a central stalk formed by the gamma and epsilon chains, while a peripheral stalk is formed by the delta and b chains.

It is found in the cell inner membrane. F(1)F(0) ATP synthase produces ATP from ADP in the presence of a proton or sodium gradient. F-type ATPases consist of two structural domains, F(1) containing the extramembraneous catalytic core and F(0) containing the membrane proton channel, linked together by a central stalk and a peripheral stalk. During catalysis, ATP synthesis in the catalytic domain of F(1) is coupled via a rotary mechanism of the central stalk subunits to proton translocation. In terms of biological role, this protein is part of the stalk that links CF(0) to CF(1). It either transmits conformational changes from CF(0) to CF(1) or is implicated in proton conduction. In Polaromonas sp. (strain JS666 / ATCC BAA-500), this protein is ATP synthase subunit delta.